The primary structure comprises 527 residues: Putative BTB/POZ domain and WD-repeat protein R783 (527 aa).

A BTB domain is found at 45–115 (TDVTIVLDDG…FYSQNTDTRN (71 aa)). 5 WD repeats span residues 215–266 (IHGD…VEAS), 272–310 (NVKT…LIKT), 313–353 (KHKN…IVRC), 355–391 (ISPV…FLFK), and 436–476 (YCPS…DNKY).

This sequence belongs to the mimivirus BTB/WD family.

This is Putative BTB/POZ domain and WD-repeat protein R783 from Acanthamoeba polyphaga (Amoeba).